The chain runs to 504 residues: Maturase K (504 aa).

Belongs to the intron maturase 2 family. MatK subfamily.

It is found in the plastid. It localises to the chloroplast. In terms of biological role, usually encoded in the trnK tRNA gene intron. Probably assists in splicing its own and other chloroplast group II introns. The protein is Maturase K of Wollastonia biflora (Beach sunflower).